The chain runs to 203 residues: MEKMVMKMLVIFVFGMNHWTCTGFPVYDYDPASLKEALSASVAKVNSQSLSPYLFRAFRSSIKRVNALDEDSLTMDLEFRIQETTCRRESEADPATCDFQRGYHVPVAVCRSTVRMSAERVQDVWVRCHWSSSSGSSSSEEMFFGDILGSSTSRNSHLLGLTPDRSRGEPLYERSREMRRNFPLGNRRYSNPWPRARVNPGFE.

An N-terminal signal peptide occupies residues 1-23 (MEKMVMKMLVIFVFGMNHWTCTG). Cystine bridges form between C86/C97 and C110/C128. S90 bears the Phosphoserine mark. A phosphoserine mark is found at S138, S139, S166, and S175. Positions 155–174 (NSHLLGLTPDRSRGEPLYER) are disordered. Residues 164–174 (DRSRGEPLYER) are compositionally biased toward basic and acidic residues.

The protein belongs to the SPP2 family. In terms of processing, multiply phosphorylated at serine residues. Phosphorylation sites are present in the extracellular medium.

It is found in the secreted. Its function is as follows. Could coordinate an aspect of bone turnover. The sequence is that of Secreted phosphoprotein 24 (SPP2) from Ovis aries (Sheep).